Consider the following 301-residue polypeptide: tRNA dimethylallyltransferase (301 aa).

An ATP-binding site is contributed by 10–17; that stretch reads GATATGKT. Residue 12-17 coordinates substrate; sequence TATGKT. The tract at residues 35–38 is interaction with substrate tRNA; sequence DSRQ.

This sequence belongs to the IPP transferase family. As to quaternary structure, monomer. Mg(2+) serves as cofactor.

The enzyme catalyses adenosine(37) in tRNA + dimethylallyl diphosphate = N(6)-dimethylallyladenosine(37) in tRNA + diphosphate. Its function is as follows. Catalyzes the transfer of a dimethylallyl group onto the adenine at position 37 in tRNAs that read codons beginning with uridine, leading to the formation of N6-(dimethylallyl)adenosine (i(6)A). This is tRNA dimethylallyltransferase from Crocosphaera subtropica (strain ATCC 51142 / BH68) (Cyanothece sp. (strain ATCC 51142)).